A 266-amino-acid polypeptide reads, in one-letter code: UPF0328 protein ECU05_1610/ECU11_0120 (266 aa).

It belongs to the UPF0328 family.

The protein is UPF0328 protein ECU05_1610/ECU11_0120 of Encephalitozoon cuniculi (strain GB-M1) (Microsporidian parasite).